A 417-amino-acid chain; its full sequence is Multifunctional CCA protein (417 aa).

Residues G8 and R11 each contribute to the ATP site. CTP-binding residues include G8 and R11. Mg(2+) contacts are provided by D21 and D23. 3 residues coordinate ATP: R91, R137, and R140. CTP contacts are provided by R91, R137, and R140. Residues 225–326 (SGIHTLMTLQ…LNVLKKTDAF (102 aa)) form the HD domain.

Belongs to the tRNA nucleotidyltransferase/poly(A) polymerase family. Bacterial CCA-adding enzyme type 1 subfamily. In terms of assembly, monomer. Can also form homodimers and oligomers. It depends on Mg(2+) as a cofactor. Requires Ni(2+) as cofactor.

It carries out the reaction a tRNA precursor + 2 CTP + ATP = a tRNA with a 3' CCA end + 3 diphosphate. The enzyme catalyses a tRNA with a 3' CCA end + 2 CTP + ATP = a tRNA with a 3' CCACCA end + 3 diphosphate. Catalyzes the addition and repair of the essential 3'-terminal CCA sequence in tRNAs without using a nucleic acid template. Adds these three nucleotides in the order of C, C, and A to the tRNA nucleotide-73, using CTP and ATP as substrates and producing inorganic pyrophosphate. tRNA 3'-terminal CCA addition is required both for tRNA processing and repair. Also involved in tRNA surveillance by mediating tandem CCA addition to generate a CCACCA at the 3' terminus of unstable tRNAs. While stable tRNAs receive only 3'-terminal CCA, unstable tRNAs are marked with CCACCA and rapidly degraded. This Neisseria meningitidis serogroup A / serotype 4A (strain DSM 15465 / Z2491) protein is Multifunctional CCA protein.